Reading from the N-terminus, the 93-residue chain is Small ribosomal subunit protein uS15 (93 aa).

Belongs to the universal ribosomal protein uS15 family. Part of the 30S ribosomal subunit. Forms a bridge to the 50S subunit in the 70S ribosome, contacting the 23S rRNA.

Its function is as follows. One of the primary rRNA binding proteins, it binds directly to 16S rRNA where it helps nucleate assembly of the platform of the 30S subunit by binding and bridging several RNA helices of the 16S rRNA. Functionally, forms an intersubunit bridge (bridge B4) with the 23S rRNA of the 50S subunit in the ribosome. This chain is Small ribosomal subunit protein uS15, found in Ehrlichia ruminantium (strain Gardel).